Here is a 69-residue protein sequence, read N- to C-terminus: Guanine nucleotide-binding protein G(I)/G(S)/G(O) subunit gamma-T2 (69 aa).

Positions 47 to 69 (DPLLKGIPEDKNPFKEKGGCMIS) are disordered. Residues 53–69 (IPEDKNPFKEKGGCMIS) show a composition bias toward basic and acidic residues. Cysteine 66 carries the post-translational modification Cysteine methyl ester. Residue cysteine 66 is the site of S-farnesyl cysteine attachment. The propeptide at 67 to 69 (MIS) is removed in mature form.

It belongs to the G protein gamma family. G proteins are composed of 3 units, alpha, beta and gamma.

It is found in the cell membrane. Functionally, guanine nucleotide-binding proteins (G proteins) are involved as a modulator or transducer in various transmembrane signaling systems. The beta and gamma chains are required for the GTPase activity, for replacement of GDP by GTP, and for G protein-effector interaction. The chain is Guanine nucleotide-binding protein G(I)/G(S)/G(O) subunit gamma-T2 (GNGT2) from Canis lupus familiaris (Dog).